Reading from the N-terminus, the 488-residue chain is UDP-N-acetylmuramate--L-alanine ligase (488 aa).

Residue 126–132 (GTHGKTT) coordinates ATP.

This sequence belongs to the MurCDEF family.

It localises to the cytoplasm. It carries out the reaction UDP-N-acetyl-alpha-D-muramate + L-alanine + ATP = UDP-N-acetyl-alpha-D-muramoyl-L-alanine + ADP + phosphate + H(+). The protein operates within cell wall biogenesis; peptidoglycan biosynthesis. Its function is as follows. Cell wall formation. This Cronobacter sakazakii (strain ATCC BAA-894) (Enterobacter sakazakii) protein is UDP-N-acetylmuramate--L-alanine ligase.